Consider the following 76-residue polypeptide: Putative membrane protein insertion efficiency factor (76 aa).

Belongs to the UPF0161 family.

The protein resides in the cell inner membrane. In terms of biological role, could be involved in insertion of integral membrane proteins into the membrane. The protein is Putative membrane protein insertion efficiency factor of Paraburkholderia phymatum (strain DSM 17167 / CIP 108236 / LMG 21445 / STM815) (Burkholderia phymatum).